A 298-amino-acid polypeptide reads, in one-letter code: Osmoprotective compounds uptake permease protein GgtD (298 aa).

Helical transmembrane passes span 26-46, 97-117, 126-146, 158-178, 207-227, 231-251, and 263-283; these read IHIA…GLFI, IAVP…YAFA, LLFI…LIPV, TFLG…IYLL, LIVP…FLWV, LLVA…TIQL, and YLLT…FFGL. One can recognise an ABC transmembrane type-1 domain in the interval 91-283; the sequence is FLNSLTIAVP…IVPLMVFFGL (193 aa).

It belongs to the binding-protein-dependent transport system permease family. In terms of assembly, the complex is composed of two ATP-binding proteins (GgtA), two transmembrane proteins (GgtC and GgtD) and a solute-binding protein (GgtB).

It localises to the cell membrane. Functionally, part of the ABC transporter complex GgtABCD involved in the uptake of the osmoprotective compounds glucosylglycerol (GG), sucrose and trehalose. Responsible for the translocation of the substrate across the membrane. The polypeptide is Osmoprotective compounds uptake permease protein GgtD (Synechocystis sp. (strain ATCC 27184 / PCC 6803 / Kazusa)).